Consider the following 412-residue polypeptide: Squamosa promoter-binding-like protein 2 (412 aa).

A disordered region spans residues 1 to 81 (MDWDAKMPSW…AAAAGKRARA (81 aa)). Over residues 18-31 (PSGGGGGGGGGGGA) the composition is skewed to gly residues. Low complexity-rich tracts occupy residues 48-57 (VSAASAAPAA) and 67-81 (SSSS…RARA). The SBP-type zinc finger occupies 89-167 (VPACSVEGCA…DGHNKRRRKP (79 aa)). 8 residues coordinate Zn(2+): Cys92, Cys97, Cys115, His118, Cys134, Cys137, His141, and Cys153. Residues 150–166 (KRSCRKRLDGHNKRRRK) carry the Bipartite nuclear localization signal motif.

As to expression, expressed in stems, leaf sheaths, and young panicles.

The protein localises to the nucleus. Its function is as follows. Trans-acting factor that binds specifically to the consensus nucleotide sequence 5'-TNCGTACAA-3'. May be involved in panicle development. This Oryza sativa subsp. japonica (Rice) protein is Squamosa promoter-binding-like protein 2 (SPL2).